The following is a 283-amino-acid chain: Phosphate import ATP-binding protein PstB (283 aa).

Positions methionine 1–serine 20 are enriched in polar residues. Positions methionine 1–serine 32 are disordered. Positions tyrosine 37–isoleucine 278 constitute an ABC transporter domain. Glycine 69–serine 76 is a binding site for ATP.

This sequence belongs to the ABC transporter superfamily. Phosphate importer (TC 3.A.1.7) family. As to quaternary structure, the complex is composed of two ATP-binding proteins (PstB), two transmembrane proteins (PstC and PstA) and a solute-binding protein (PstS).

It is found in the cell membrane. The enzyme catalyses phosphate(out) + ATP + H2O = ADP + 2 phosphate(in) + H(+). Its function is as follows. Part of the ABC transporter complex PstSACB involved in phosphate import. Responsible for energy coupling to the transport system. The sequence is that of Phosphate import ATP-binding protein PstB from Staphylococcus aureus (strain USA300).